The following is a 375-amino-acid chain: B3 domain-containing protein REM-like 2 (375 aa).

3 consecutive DNA-binding regions (TF-B3) follow at residues 51-147 (SFVA…KRLY), 131-226 (FVTV…YGTN), and 277-375 (RLVI…KSGK).

Its subcellular location is the nucleus. This is B3 domain-containing protein REM-like 2 from Arabidopsis thaliana (Mouse-ear cress).